The following is a 239-amino-acid chain: Fatty acid metabolism regulator protein (239 aa).

In terms of domain architecture, HTH gntR-type spans 6–74 (QSPAGFAEEY…HGKPTKVNNF (69 aa)). The segment at residues 34 to 53 (ERELSELIGVTRTTLREVLQ) is a DNA-binding region (H-T-H motif).

In terms of assembly, homodimer.

It is found in the cytoplasm. Its function is as follows. Multifunctional regulator of fatty acid metabolism. This is Fatty acid metabolism regulator protein from Enterobacter sp. (strain 638).